The following is a 92-amino-acid chain: Elongation factor 1-beta (92 aa).

This sequence belongs to the EF-1-beta/EF-1-delta family.

Promotes the exchange of GDP for GTP in EF-1-alpha/GDP, thus allowing the regeneration of EF-1-alpha/GTP that could then be used to form the ternary complex EF-1-alpha/GTP/AAtRNA. The polypeptide is Elongation factor 1-beta (Hyperthermus butylicus (strain DSM 5456 / JCM 9403 / PLM1-5)).